The sequence spans 646 residues: Lipoteichoic acid synthase (646 aa).

The Cytoplasmic segment spans residues 1–7 (MSSQKKK). The chain crosses the membrane as a helical span at residues 8–28 (ISLFAFFLLTVITITLKTYFS). Topologically, residues 29–43 (YYVDFSLGVKGLVQN) are extracellular. The chain crosses the membrane as a helical span at residues 44-64 (LILLMNPYSLVALVLSVFLFF). The Cytoplasmic segment spans residues 65 to 68 (KGKK). The helical transmembrane segment at 69 to 89 (AFWFMFIGGFLLTFLLYANVV) threads the bilayer. The Extracellular portion of the chain corresponds to 90 to 119 (YFRFFSDFLTFSTLNQVGNVESMGGAVSAS). A helical transmembrane segment spans residues 120-140 (FKWYDFVYFIDTLVYLFILIF). At 141–153 (KTKWLDTKAFSKK) the chain is on the cytoplasmic side. The chain crosses the membrane as a helical span at residues 154–174 (FVPVVMAASVALFFLNLAFAE). The Extracellular portion of the chain corresponds to 175–646 (TDRPELLTRT…ETGPKANSKK (472 aa)). E255 and T300 together coordinate Mn(2+). Residue T300 is part of the active site. H416 serves as a coordination point for substrate. 2 residues coordinate Mn(2+): D475 and H476. Positions 623–638 (NPDFKKVNPSKYKYET) are enriched in basic and acidic residues. A disordered region spans residues 623–646 (NPDFKKVNPSKYKYETGPKANSKK).

Belongs to the LTA synthase family. In terms of processing, proteolytically cleaved.

It is found in the cell membrane. Its subcellular location is the secreted. It participates in cell wall biogenesis; lipoteichoic acid biosynthesis. Catalyzes the polymerization of lipoteichoic acid (LTA) polyglycerol phosphate, a reaction that presumably uses phosphatidylglycerol (PG) as substrate. Is required for staphylococcal growth and cell division process. In Staphylococcus aureus (strain bovine RF122 / ET3-1), this protein is Lipoteichoic acid synthase (ltaS).